The sequence spans 118 residues: UPF0251 protein TTE1845 (118 aa).

This sequence belongs to the UPF0251 family.

This Caldanaerobacter subterraneus subsp. tengcongensis (strain DSM 15242 / JCM 11007 / NBRC 100824 / MB4) (Thermoanaerobacter tengcongensis) protein is UPF0251 protein TTE1845.